Consider the following 343-residue polypeptide: Biotin synthase (343 aa).

The 219-residue stretch at 36-254 (RQVQVSTLLS…IAVARIMMPR (219 aa)) folds into the Radical SAM core domain. [4Fe-4S] cluster-binding residues include Cys-51, Cys-55, and Cys-58. 4 residues coordinate [2Fe-2S] cluster: Cys-95, Cys-126, Cys-186, and Arg-258.

The protein belongs to the radical SAM superfamily. Biotin synthase family. Homodimer. [4Fe-4S] cluster is required as a cofactor. [2Fe-2S] cluster serves as cofactor.

The enzyme catalyses (4R,5S)-dethiobiotin + (sulfur carrier)-SH + 2 reduced [2Fe-2S]-[ferredoxin] + 2 S-adenosyl-L-methionine = (sulfur carrier)-H + biotin + 2 5'-deoxyadenosine + 2 L-methionine + 2 oxidized [2Fe-2S]-[ferredoxin]. Its pathway is cofactor biosynthesis; biotin biosynthesis; biotin from 7,8-diaminononanoate: step 2/2. Catalyzes the conversion of dethiobiotin (DTB) to biotin by the insertion of a sulfur atom into dethiobiotin via a radical-based mechanism. This chain is Biotin synthase, found in Erwinia tasmaniensis (strain DSM 17950 / CFBP 7177 / CIP 109463 / NCPPB 4357 / Et1/99).